Consider the following 664-residue polypeptide: Serine/threonine-protein kinase PknD (664 aa).

Residues 1-381 lie on the Cytoplasmic side of the membrane; that stretch reads MSDAVPQVGS…PAGNKRKVWA (381 aa). Residues 15–276 enclose the Protein kinase domain; that stretch reads YQLLRLLGRG…DLAIAAHDAL (262 aa). ATP-binding positions include 21-29 and Lys44; that span reads LGRGGMGEV. Thr135 bears the Phosphothreonine; by autocatalysis mark. Asp138 functions as the Proton acceptor in the catalytic mechanism. Phosphothreonine; by autocatalysis is present on residues Thr169, Thr171, Thr173, and Thr209. Residues 303 to 333 are disordered; that stretch reads TGLSQSESGIAGAGTGPPTPGAARWSPGDSA. The helical transmembrane segment at 382-402 threads the bilayer; sequence VVGAAAIVLVAIVAAAGYLVL. Topologically, residues 403-664 are extracellular; it reads RPSWSPTQAS…GNDRVVKLTS (262 aa). NHL repeat units lie at residues 414–456, 457–497, 498–539, 540–581, 582–623, and 624–664; these read QTVL…LATG, STGT…LAAG, SNNQ…LAAG, SKTQ…LEAE, SNNQ…LLAG, and STTS…KLTS.

Belongs to the protein kinase superfamily. Ser/Thr protein kinase family. In terms of assembly, homodimer. The extracellular domain interacts with host laminin. Post-translationally, autophosphorylated. Dephosphorylated by PstP.

Its subcellular location is the cell membrane. It carries out the reaction L-seryl-[protein] + ATP = O-phospho-L-seryl-[protein] + ADP + H(+). The enzyme catalyses L-threonyl-[protein] + ATP = O-phospho-L-threonyl-[protein] + ADP + H(+). With respect to regulation, dimerization activates the kinase domain of unphosphorylated PknD via an allosteric mechanism, triggering autophosphorylation and phosphorylation of target proteins. Phosphorylated PknD is fully active even in the absence of dimerization. Functionally, part of a signaling pathway that enables adaptation to osmotic stress through cell wall remodeling and virulence factor production. Key microbial factor required for central nervous system tuberculosis. Required for invasion of host brain endothelia, but not macrophages, lung epithelia or other endothelia. This Mycobacterium tuberculosis (strain CDC 1551 / Oshkosh) protein is Serine/threonine-protein kinase PknD (pknD).